Here is a 147-residue protein sequence, read N- to C-terminus: Peptide deformylase 1 (147 aa).

Fe cation is bound by residues cysteine 90 and histidine 132. Residue glutamate 133 is part of the active site. Histidine 136 contributes to the Fe cation binding site.

This sequence belongs to the polypeptide deformylase family. Fe(2+) serves as cofactor.

It catalyses the reaction N-terminal N-formyl-L-methionyl-[peptide] + H2O = N-terminal L-methionyl-[peptide] + formate. In terms of biological role, removes the formyl group from the N-terminal Met of newly synthesized proteins. Requires at least a dipeptide for an efficient rate of reaction. N-terminal L-methionine is a prerequisite for activity but the enzyme has broad specificity at other positions. The sequence is that of Peptide deformylase 1 from Clostridium perfringens (strain 13 / Type A).